The sequence spans 158 residues: Phosphopantetheine adenylyltransferase (158 aa).

Position 9 (Thr9) interacts with substrate. ATP contacts are provided by residues 9 to 10 and His17; that span reads TF. Lys41, Leu73, and Arg87 together coordinate substrate. ATP contacts are provided by residues 88-90, Glu98, and 123-129; these read GVR and WSYVSST.

This sequence belongs to the bacterial CoaD family. As to quaternary structure, homohexamer. The cofactor is Mg(2+).

It is found in the cytoplasm. It catalyses the reaction (R)-4'-phosphopantetheine + ATP + H(+) = 3'-dephospho-CoA + diphosphate. It participates in cofactor biosynthesis; coenzyme A biosynthesis; CoA from (R)-pantothenate: step 4/5. Reversibly transfers an adenylyl group from ATP to 4'-phosphopantetheine, yielding dephospho-CoA (dPCoA) and pyrophosphate. The chain is Phosphopantetheine adenylyltransferase from Histophilus somni (strain 2336) (Haemophilus somnus).